We begin with the raw amino-acid sequence, 595 residues long: FERM domain-containing protein 3 (595 aa).

Residues 32 to 312 enclose the FERM domain; that stretch reads MKCTIRLLDD…ENQAFYKYAK (281 aa). The chain crosses the membrane as a helical span at residues 529-549; that stretch reads LLVVGLGLLLFVFPLLLLLLE.

The protein localises to the membrane. Its function is as follows. Putative tumor suppressor gene that may be implicated in the origin and progression of lung cancer. The polypeptide is FERM domain-containing protein 3 (Frmd3) (Mus musculus (Mouse)).